The sequence spans 358 residues: PqqA peptide cyclase (358 aa).

The Radical SAM core domain occupies 4-219 (PSPPMSLLAE…VEAERAKGGL (216 aa)). 3 residues coordinate [4Fe-4S] cluster: cysteine 18, cysteine 22, and cysteine 25.

The protein belongs to the radical SAM superfamily. PqqE family. In terms of assembly, interacts with PqqD. The interaction is necessary for activity of PqqE. It depends on [4Fe-4S] cluster as a cofactor.

The enzyme catalyses [PQQ precursor protein] + S-adenosyl-L-methionine = E-Y cross-linked-[PQQ precursor protein] + 5'-deoxyadenosine + L-methionine + H(+). It functions in the pathway cofactor biosynthesis; pyrroloquinoline quinone biosynthesis. Its function is as follows. Catalyzes the cross-linking of a glutamate residue and a tyrosine residue in the PqqA protein as part of the biosynthesis of pyrroloquinoline quinone (PQQ). The protein is PqqA peptide cyclase of Gluconobacter oxydans (strain 621H) (Gluconobacter suboxydans).